Consider the following 531-residue polypeptide: Transactivator/viroplasmin protein (531 aa).

Disordered stretches follow at residues 80–101 (ASGK…TATG) and 505–531 (CKSE…SVLV). Composition is skewed to polar residues over residues 91–100 (SATSPEQTAT) and 505–517 (CKSE…TSEE). The segment covering 518–531 (GLQESEDEDFSVLV) has biased composition (acidic residues).

Belongs to the caulimoviridae viroplasmin family.

The protein localises to the host cytoplasm. Enhances the translation of downstream ORFs on polycistronic mRNAs. The sequence is that of Transactivator/viroplasmin protein from Cestrum yellow leaf curling virus (CmYLCV).